Here is a 471-residue protein sequence, read N- to C-terminus: Argininosuccinate lyase (471 aa).

The protein belongs to the lyase 1 family. Argininosuccinate lyase subfamily.

The protein resides in the cytoplasm. The catalysed reaction is 2-(N(omega)-L-arginino)succinate = fumarate + L-arginine. It participates in amino-acid biosynthesis; L-arginine biosynthesis; L-arginine from L-ornithine and carbamoyl phosphate: step 3/3. This chain is Argininosuccinate lyase, found in Deinococcus radiodurans (strain ATCC 13939 / DSM 20539 / JCM 16871 / CCUG 27074 / LMG 4051 / NBRC 15346 / NCIMB 9279 / VKM B-1422 / R1).